The sequence spans 269 residues: UPF0761 membrane protein HI_0276 (269 aa).

Transmembrane regions (helical) follow at residues 32–52 (MLAM…FPVF), 89–109 (MSAV…NNID), 128–148 (FAIY…SIGI), 168–188 (LLSF…YTVV), 203–223 (FLAA…IVTF), and 232–252 (AMAT…VVLV).

Belongs to the UPF0761 family.

The protein resides in the cell inner membrane. This Haemophilus influenzae (strain ATCC 51907 / DSM 11121 / KW20 / Rd) protein is UPF0761 membrane protein HI_0276.